A 317-amino-acid chain; its full sequence is Small glutamine-rich tetratricopeptide repeat-containing protein 2 (317 aa).

TPR repeat units follow at residues 14–48 (LKQA…KPEE), 83–116 (AEKL…DPTS), 118–150 (VYYS…DPHH), and 151–184 (ARAF…DPNN). The segment covering 198–215 (LNQPSDSSATSGADQART) has biased composition (polar residues). Disordered stretches follow at residues 198 to 224 (LNQP…PDLG) and 298 to 317 (MNNN…PPPQ).

This sequence belongs to the SGT family.

The protein resides in the cytoplasm. The protein localises to the nucleus. Functionally, co-chaperone that binds to the molecular chaperone Hsp70 and regulates Hsp70 ATPase activity. This is Small glutamine-rich tetratricopeptide repeat-containing protein 2 (sgt2) from Schizosaccharomyces pombe (strain 972 / ATCC 24843) (Fission yeast).